A 631-amino-acid polypeptide reads, in one-letter code: Phosphomethylpyrimidine synthase (631 aa).

Substrate is bound by residues N239, M268, Y297, H333, 353–355 (SRG), 394–397 (DGLR), and E433. Zn(2+) is bound at residue H437. Y460 lines the substrate pocket. A Zn(2+)-binding site is contributed by H501. Residues C581, C584, and C589 each coordinate [4Fe-4S] cluster.

The protein belongs to the ThiC family. As to quaternary structure, homodimer. The cofactor is [4Fe-4S] cluster.

It catalyses the reaction 5-amino-1-(5-phospho-beta-D-ribosyl)imidazole + S-adenosyl-L-methionine = 4-amino-2-methyl-5-(phosphooxymethyl)pyrimidine + CO + 5'-deoxyadenosine + formate + L-methionine + 3 H(+). It functions in the pathway cofactor biosynthesis; thiamine diphosphate biosynthesis. Functionally, catalyzes the synthesis of the hydroxymethylpyrimidine phosphate (HMP-P) moiety of thiamine from aminoimidazole ribotide (AIR) in a radical S-adenosyl-L-methionine (SAM)-dependent reaction. The polypeptide is Phosphomethylpyrimidine synthase (Klebsiella pneumoniae (strain 342)).